The chain runs to 54 residues: Large ribosomal subunit protein bL32 (54 aa).

The protein belongs to the bacterial ribosomal protein bL32 family.

The protein is Large ribosomal subunit protein bL32 of Buchnera aphidicola subsp. Baizongia pistaciae (strain Bp).